We begin with the raw amino-acid sequence, 958 residues long: Glycine dehydrogenase (decarboxylating) 2 (958 aa).

Lys-707 is subject to N6-(pyridoxal phosphate)lysine.

It belongs to the GcvP family. The glycine cleavage system is composed of four proteins: P, T, L and H. Requires pyridoxal 5'-phosphate as cofactor.

The enzyme catalyses N(6)-[(R)-lipoyl]-L-lysyl-[glycine-cleavage complex H protein] + glycine + H(+) = N(6)-[(R)-S(8)-aminomethyldihydrolipoyl]-L-lysyl-[glycine-cleavage complex H protein] + CO2. Its function is as follows. The glycine cleavage system catalyzes the degradation of glycine. The P protein binds the alpha-amino group of glycine through its pyridoxal phosphate cofactor; CO(2) is released and the remaining methylamine moiety is then transferred to the lipoamide cofactor of the H protein. The chain is Glycine dehydrogenase (decarboxylating) 2 (gcvP2) from Pseudomonas aeruginosa (strain ATCC 15692 / DSM 22644 / CIP 104116 / JCM 14847 / LMG 12228 / 1C / PRS 101 / PAO1).